We begin with the raw amino-acid sequence, 345 residues long: Serine/arginine-rich splicing factor 6 (345 aa).

The 72-residue stretch at 1–72 (MPRVYIGRLS…ERVIVEHARG (72 aa)) folds into the RRM 1 domain. Phosphoserine occurs at positions 45, 81, and 84. The segment at 75 to 102 (RDRDGYSYGSRSGGGGYSSRRTSGRDKY) is disordered. The RRM 2 domain occupies 110-183 (FRLIVENLSS…RNIRLIEDKP (74 aa)). Position 165 is an N6-acetyllysine (K165). The tract at residues 176-345 (IRLIEDKPRT…RSRSRSSSRD (170 aa)) is disordered. K182 participates in a covalent cross-link: Glycyl lysine isopeptide (Lys-Gly) (interchain with G-Cter in SUMO2). Over residues 185 to 250 (TSHRRSYSGS…RKSRSKSKSK (66 aa)) the composition is skewed to basic residues. Basic and acidic residues-rich tracts occupy residues 264 to 273 (RSKDEYEKSR) and 282 to 293 (SPKENGKGDIKS). A phosphoserine mark is found at S299 and S301. S305 bears the Phosphoserine; by DYRK1A mark. Phosphoserine occurs at positions 316 and 318. Residues 323-345 (RASRSHSRSRSKSRSRSRSSSRD) show a composition bias toward basic residues.

Belongs to the splicing factor SR family. In terms of assembly, binds SREK1/SFRS12. Interacts with DYRK1A. Post-translationally, extensively phosphorylated on serine residues in the RS domain. Phosphorylated by DYRK1A, probably in the RS domain. Phosphorylation by DYRK1A modulates alternative splice site selection and inhibits the expression of MAPT/Tau exon 10.

It localises to the nucleus. Its subcellular location is the nucleus speckle. Functionally, plays a role in constitutive splicing and modulates the selection of alternative splice sites. Plays a role in the alternative splicing of MAPT/Tau exon 10. Binds to alternative exons of TNC pre-mRNA and promotes the expression of alternatively spliced TNC. Plays a role in wound healing and in the regulation of keratinocyte differentiation and proliferation via its role in alternative splicing. This Bos taurus (Bovine) protein is Serine/arginine-rich splicing factor 6 (SRSF6).